A 576-amino-acid chain; its full sequence is Arginine--tRNA ligase (576 aa).

The 'HIGH' region motif lies at 122–132 (PNVAKEMHVGH).

This sequence belongs to the class-I aminoacyl-tRNA synthetase family. In terms of assembly, monomer.

It is found in the cytoplasm. It carries out the reaction tRNA(Arg) + L-arginine + ATP = L-arginyl-tRNA(Arg) + AMP + diphosphate. This Erwinia tasmaniensis (strain DSM 17950 / CFBP 7177 / CIP 109463 / NCPPB 4357 / Et1/99) protein is Arginine--tRNA ligase.